We begin with the raw amino-acid sequence, 200 residues long: MQKFIIHKGIACPLEYANIDTDQIIPKQFLLAVSKQGFGKHLFHDLRYLDDKESVLNMDFNLNKKEYQNSSILVSFENFGSGSSREHAPWALVDYGIRAIIAPSFADIFKNNALGNGLLTIELAKDEVLGIVDELKKSQDKNIEISLLEKRVFFKDKIFSFDLDDFHRICLLEGLDNIALTLKHEAQIKAYEKNSKSFLV.

The protein belongs to the LeuD family. LeuD type 1 subfamily. As to quaternary structure, heterodimer of LeuC and LeuD.

It catalyses the reaction (2R,3S)-3-isopropylmalate = (2S)-2-isopropylmalate. It participates in amino-acid biosynthesis; L-leucine biosynthesis; L-leucine from 3-methyl-2-oxobutanoate: step 2/4. Functionally, catalyzes the isomerization between 2-isopropylmalate and 3-isopropylmalate, via the formation of 2-isopropylmaleate. This is 3-isopropylmalate dehydratase small subunit from Campylobacter jejuni subsp. jejuni serotype O:23/36 (strain 81-176).